Here is a 324-residue protein sequence, read N- to C-terminus: Phthalate 4,5-dioxygenase oxygenase reductase subunit (324 aa).

In terms of domain architecture, FAD-binding FR-type spans 9–111 (DGFTGLKVIA…ATPQNEFELI (103 aa)). NAD(+) is bound at residue 115–229 (RQFIFVAGGI…PGSIHFESFG (115 aa)). The 2Fe-2S ferredoxin-type domain occupies 241 to 324 (FSVTLGRSGI…ARNDVLVLDL (84 aa)). [2Fe-2S] cluster contacts are provided by C275, C280, C283, and C311.

This sequence belongs to the PDR/VanB family. This dioxygenase system consists of two proteins: phthalate oxygenase and phthalate oxygenase reductase. FMN is required as a cofactor.

The catalysed reaction is phthalate + NADH + O2 + H(+) = cis-4,5-dihydroxycyclohexa-2,6-diene-1,2-dicarboxylate + NAD(+). It participates in xenobiotic degradation; phthalate degradation; 3,4-dihydroxybenzoate from phthalate: step 1/3. The protein is Phthalate 4,5-dioxygenase oxygenase reductase subunit (pht2) of Pseudomonas putida (Arthrobacter siderocapsulatus).